We begin with the raw amino-acid sequence, 367 residues long: 3-dehydroquinate synthase (367 aa).

NAD(+) contacts are provided by residues 69-74, 103-107, 127-128, Lys-140, and Lys-149; these read DGEAFK, GVIGD, and TT. Zn(2+)-binding residues include Glu-182, His-245, and His-262.

Belongs to the sugar phosphate cyclases superfamily. Dehydroquinate synthase family. NAD(+) is required as a cofactor. Requires Co(2+) as cofactor. It depends on Zn(2+) as a cofactor.

The protein localises to the cytoplasm. The catalysed reaction is 7-phospho-2-dehydro-3-deoxy-D-arabino-heptonate = 3-dehydroquinate + phosphate. Its pathway is metabolic intermediate biosynthesis; chorismate biosynthesis; chorismate from D-erythrose 4-phosphate and phosphoenolpyruvate: step 2/7. Catalyzes the conversion of 3-deoxy-D-arabino-heptulosonate 7-phosphate (DAHP) to dehydroquinate (DHQ). The chain is 3-dehydroquinate synthase from Pseudomonas syringae pv. tomato (strain ATCC BAA-871 / DC3000).